Here is a 312-residue protein sequence, read N- to C-terminus: MSSAPPAPRVIAVVGPTAAGKSDLGVFLAQRLDGEVVNADSMQLYRGMDIGTAKLTPEERGGIPHHLLDIWDVTVAASVAEYQRLARARIDALLAEGRWPILVGGSGLYVRGAVDNLEFPGTDPEVRARLEEELALRGPGALHARLAAADPEAGHAILSSNGRRIVRALEVIEITGRPFTANLPGHDSVYDTVQIGVDVARPELDERIARRVDRMWEAGLVDEVRALEAQGLREGRTASRALGYQQVLAALAGECTEDEARAETVRATKRFARRQDSWFRRDPRVHWLSGAAADLTELPQLALMLVERPVTA.

15-22 (GPTAAGKS) serves as a coordination point for ATP. 17–22 (TAAGKS) is a binding site for substrate. The interaction with substrate tRNA stretch occupies residues 40–43 (DSMQ).

It belongs to the IPP transferase family. Monomer. The cofactor is Mg(2+).

The enzyme catalyses adenosine(37) in tRNA + dimethylallyl diphosphate = N(6)-dimethylallyladenosine(37) in tRNA + diphosphate. Functionally, catalyzes the transfer of a dimethylallyl group onto the adenine at position 37 in tRNAs that read codons beginning with uridine, leading to the formation of N6-(dimethylallyl)adenosine (i(6)A). In Streptomyces avermitilis (strain ATCC 31267 / DSM 46492 / JCM 5070 / NBRC 14893 / NCIMB 12804 / NRRL 8165 / MA-4680), this protein is tRNA dimethylallyltransferase.